A 207-amino-acid chain; its full sequence is MRVFTLIAILFSSSLLTHAFSSNYAPVGISLPAFTKECLYYDLSSDKDVLVVSYQVLTGGNFEIDFDITAPDGSVIVTERQKKHSDFLLKSFGIGKYTFCLSNNYGTSPKKVEITLEKEKEIVSSHESKEDIIANNAIEEIDRNLNKITKTMDYLRAREWRNMYTVSSTESRLTWLSLLIMGVMVGISIVQALIIQFFFTSRQKNYV.

The signal sequence occupies residues 1-21; sequence MRVFTLIAILFSSSLLTHAFS. The Lumenal segment spans residues 22–174; the sequence is SNYAPVGISL…TVSSTESRLT (153 aa). Positions 36–118 constitute a GOLD domain; sequence KECLYYDLSS…PKKVEITLEK (83 aa). A helical membrane pass occupies residues 175–195; the sequence is WLSLLIMGVMVGISIVQALII. The Cytoplasmic portion of the chain corresponds to 196–207; sequence QFFFTSRQKNYV.

Belongs to the EMP24/GP25L family.

It localises to the endoplasmic reticulum membrane. Its function is as follows. Involved in vesicular protein trafficking. The polypeptide is Protein ERP4 (ERP4) (Saccharomyces cerevisiae (strain ATCC 204508 / S288c) (Baker's yeast)).